The primary structure comprises 117 residues: Large ribosomal subunit protein bL19 (117 aa).

This sequence belongs to the bacterial ribosomal protein bL19 family.

Its function is as follows. This protein is located at the 30S-50S ribosomal subunit interface and may play a role in the structure and function of the aminoacyl-tRNA binding site. In Aliivibrio salmonicida (strain LFI1238) (Vibrio salmonicida (strain LFI1238)), this protein is Large ribosomal subunit protein bL19.